An 879-amino-acid chain; its full sequence is Levansucrase (879 aa).

The first 37 residues, 1–37 (MTKEHKKMYKAGKYWAVATLVSASILMEVGVTTHADA), serve as a signal peptide directing secretion. Tandem repeats lie at residues 66 to 81 (DNATSGSTKQESSIAN), 82 to 97 (DNATSGSTKQESSIAN), 98 to 113 (DNATSGSTKQESSIAN), 114 to 129 (DNATSGSTKQESSVAN), 130 to 145 (DNATSGSTKQESSVAN), 146 to 161 (DNATSGSTKQESSVAN), and 162 to 177 (DNATSGSTKQESSVAN). The interval 66-177 (DNATSGSTKQ…STKQESSVAN (112 aa)) is 7 X 16 AA tandem repeats of D-N-A-T-S-G-S-T-K-Q-E-S-S-[IV]-A-N. Composition is skewed to polar residues over residues 66–180 (DNAT…NDTK) and 189–213 (NTSNTENDNSQLKQTNNEQPSAATQ). Positions 66–213 (DNATSGSTKQ…NNEQPSAATQ (148 aa)) are disordered. The sucrose site is built by Trp311, Asp312, and Ser382. The active-site Nucleophile is the Asp312. Asp460 provides a ligand contact to Ca(2+). Positions 465 and 466 each coordinate sucrose. Residues Gln491, Leu528, Asn530, and Asp562 each coordinate Ca(2+). Glu563 is a binding site for sucrose. The Proton donor/acceptor role is filled by Glu565. Residue Arg583 participates in sucrose binding. The tract at residues 743–830 (SSGLGLKPHQ…TPAKPVQAGQ (88 aa)) is disordered. Residues 754 to 821 (VNPSQPTTPA…KPVNPSQPTT (68 aa)) show a composition bias toward polar residues. Positions 841–845 (LPQTG) match the LPXTG sorting signal motif. Thr844 carries the post-translational modification Pentaglycyl murein peptidoglycan amidated threonine. Positions 845–879 (GENNSQSQTMSFIGILLAMFGSLLGFLGIKKRRND) are cleaved as a propeptide — removed by sortase.

This sequence belongs to the glycosyl hydrolase 68 family.

Its subcellular location is the secreted. It is found in the cell wall. It carries out the reaction [6)-beta-D-fructofuranosyl-(2-&gt;](n) alpha-D-glucopyranoside + sucrose = [6)-beta-D-fructofuranosyl-(2-&gt;](n+1) alpha-D-glucopyranoside + D-glucose. Ca(2+) may play an important structural role and promote stability of levansucrase. Fructosyltransferase that catalyzes the polymerization of the fructose moiety of sucrose to produce levan polymer and the fructo-oligosaccharide (FOS) 1-kestose. Also displays sucrose hydrolase activity. This Fructilactobacillus sanfranciscensis (Lactobacillus sanfranciscensis) protein is Levansucrase.